The chain runs to 184 residues: Transcription termination/antitermination protein NusG (184 aa).

The protein belongs to the NusG family.

In terms of biological role, participates in transcription elongation, termination and antitermination. This Borreliella burgdorferi (strain ATCC 35210 / DSM 4680 / CIP 102532 / B31) (Borrelia burgdorferi) protein is Transcription termination/antitermination protein NusG.